Reading from the N-terminus, the 523-residue chain is Cytochrome P450 monooxygenase ple1 (523 aa).

The helical transmembrane segment at 9–29 (ALPVLAIWAAIGLAYWIDSQK) threads the bilayer. A glycan (N-linked (GlcNAc...) asparagine) is linked at Asn141. Cys444 serves as a coordination point for heme.

It belongs to the cytochrome P450 family. Heme is required as a cofactor.

Its subcellular location is the membrane. It functions in the pathway secondary metabolite biosynthesis; terpenoid biosynthesis. Functionally, cytochrome P450 monooxygenase; part of the gene cluster that mediates the biosynthesis of pleuromutilin, a tricyclic diterpene showing antibacterial properties. The geranylgeranyl diphosphate (GGPP) synthase ple4 catalyzes the first step in pleuromutilin biosynthesis. GGPP is then substrate of the premutilin synthase (PS) ple3 to yield premutilin. Premutilin synthase is a bifunctional enzyme composed of the fusion of a class II diterpene cyclase (DTC) and a class I diterpene synthase (DTS), with the corresponding domains and active sites containing characteristic aspartate-rich motifs. GGPP is first converted to mutildienyl-diphosphate (MPP) at the class II DTC site. MPP is subsequently further cyclized at the class I DTS site, followed by a 1,5-hydride shift and addition of water prior to terminating deprotonation, to yield premutilin. The cytochrome P450 monooxygenases ple5 and ple6 hydroxylate premutilin at C-11 and C-3, respectively, producing 11-hydroxypremutilin and 3-hydroxypremutilin. The combination of the actions of both ple5 and ple6 leads to the production of 3,11-dihydroxypremutilin. The short chain dehydrogenase ple7 further converts 3,11-dihydroxypremutilin into mutilin. The acetyltransferase ple2 then acetylates mutilin to produce 14-O-acetylmutilin. Finally, the cytochrome P450 monooxygenase ple1 catalyzes hydroxylation on the alpha position of the acetyl side chain of 14-O-acetylmutilin to yield pleuromutilin. This Rhodocybe pseudopiperita (Clitopilus pseudopiperitus) protein is Cytochrome P450 monooxygenase ple1.